We begin with the raw amino-acid sequence, 361 residues long: MASAARSASRAFLRSSLRPAVRSSRFALPTQGLRVASRRGYSSEASSGKSSNTLLWAGVALAGGAGAYFYLQGGDVGASTKVFTPTKEDYQKVYNAIAERLANETDYDDGSYGPVLVRLAWHASGTYDAETGTGGSNGATMRFAPESDHGANAGLKYARDFLEPIKAKFPWITYSDLWTLAGACAIQELGGPDIPWRPGRQDKDVSGCTPDGRLPDATKNQDHIRAIFGRMGFDDREMVALIGAHALGRAHTDRSGFDGPWNFSPTVFTNEFFRLLVEEKWQPRKWNGPKQFTDNTTKTLMMFPTDLALVQDKGFRKHVERYAKDSDAFFKEFSEVFVKLLELGVPFNSKVEDRYVFKRSE.

A mitochondrion-targeting transit peptide spans 1-41 (MASAARSASRAFLRSSLRPAVRSSRFALPTQGLRVASRRGY). Residue His-122 is the Proton acceptor of the active site. Heme b is bound at residue His-245. The active-site Tryptophan radical intermediate is the Trp-261.

This sequence belongs to the peroxidase family. Cytochrome c peroxidase subfamily. In terms of assembly, forms a one-to-one complex with cytochrome c. It depends on heme b as a cofactor.

It localises to the mitochondrion matrix. The protein resides in the mitochondrion intermembrane space. It catalyses the reaction 2 Fe(II)-[cytochrome c] + H2O2 + 2 H(+) = 2 Fe(III)-[cytochrome c] + 2 H2O. Functionally, destroys radicals which are normally produced within the cells and which are toxic to biological systems. The sequence is that of Cytochrome c peroxidase, mitochondrial (ccp1) from Emericella nidulans (strain FGSC A4 / ATCC 38163 / CBS 112.46 / NRRL 194 / M139) (Aspergillus nidulans).